We begin with the raw amino-acid sequence, 329 residues long: Protein STRICTOSIDINE SYNTHASE-LIKE 11 (329 aa).

The signal sequence occupies residues 1-23 (MMRSFVSLISLLLLLSFSSSVLS). N-linked (GlcNAc...) asparagine glycosylation is found at asparagine 37 and asparagine 79.

The protein belongs to the strictosidine synthase family.

Its subcellular location is the vacuole. It carries out the reaction 3alpha(S)-strictosidine + H2O = secologanin + tryptamine. The protein operates within alkaloid biosynthesis; 3alpha(S)-strictosidine biosynthesis; 3alpha(S)-strictosidine from secologanin and tryptamine: step 1/1. Functionally, catalyzes the stereospecific condensation of tryptamine with secologanin to form strictosidine, the key intermediate of indole alkaloid biosynthesis. This is Protein STRICTOSIDINE SYNTHASE-LIKE 11 from Arabidopsis thaliana (Mouse-ear cress).